The following is a 659-amino-acid chain: Pro-secreted protein ORF2 (659 aa).

The N-terminal stretch at 1 to 23 (MRPRPLLLLFLLFLPMLPAPPTG) is a signal peptide. 2 disordered regions span residues 19–43 (APPT…GFWG) and 64–107 (PDVA…TAGA). A Nuclear localization signal motif is present at residues 28–33 (RRRGRR). A compositionally biased stretch (low complexity) spans 92-107 (QRPSAASRRRPATAGA). 2 N-linked (GlcNAc...) asparagine; by host glycosylation sites follow: Asn-137 and Asn-310. Positions 367-393 (IALTLLNLADTLLGGLPTELISSAGGQ) are particle formation. Asn-561 carries an N-linked (GlcNAc...) asparagine; by host glycan. The tract at residues 584 to 609 (TTRLGAGPVAISAAAVLAPRSALALL) is oligomerization.

This sequence belongs to the hepevirus capsid protein family. As to quaternary structure, homodimer. Self-assembles to form the capsid. The capsid is dominated by dimers that define the 30 morphological units. Interacts with phosphorylated protein ORF3. Interacts with host TMEM134. Interacts with host ASGR1 and ASGR2; these interactions facilitate infection of host hepatocytes. Post-translationally, cleaved by host protease in the N-terminus. In terms of processing, N-glycosylated. Not N-glycosylated. The C-terminus of the capsid protein ORF2 is truncated in non-enveloped virions shedded in feces, probably due to host proteases.

Its subcellular location is the secreted. The protein resides in the virion. It is found in the host cytoplasm. It localises to the host endoplasmic reticulum. The protein localises to the host Golgi apparatus. Its subcellular location is the host cell surface. The protein resides in the host nucleus. In terms of biological role, plays a role in the inhibition of host antibody-mediated neutralization without blocking viral cell entry. Functionally, forms an icosahedral capsid with a T=1 symmetry and a 34 nm diameter. The capsid is composed of 60 copies linked to each other. Binds to the 5' end of the genomic RNA to mediate genome encapsidation. Binds to heparin surface proteoglycans (HSPGs) to mediate viral entry. Additionally, the interactions with host ASGR1 and ASGR2 facilitate viral infection of hepatocytes. Inhibits IFN production by blocking host TBK1-induced IRF3 phosphorylation. The nuclear form probably modulates host gene expression. The sequence is that of Pro-secreted protein ORF2 from Bandicota bengalensis (lesser bandicoot rat).